We begin with the raw amino-acid sequence, 409 residues long: MARAKFERTKPHVNIGTIGHVDHGKTTLTAAITMSLAALGQAKARKYDDIDAAPEERERGITINTAHVEYETQDRHYAHVDCPGHADYVKNMITGAAQMDGAVLVVSAADGPMPQTREHILLAKQVGVPNIVVFMNKQDQVDDEELLELVELEVRELLNDYDFPGDDIPIVSGSALMALEALNGADSMKKGDNEWVDKIYKLMEEVDAYIPTPERDVDKPFLMAVEDVFSITGRGTVATGRIERGKVVVGETVELVGIRDTRSTTVTGVEMFQKTLDEGMAGDNVGLLLRGVQKEDIERGMVLAKPGSITPHTQFESEVYILKKDEGGRHTPFFPGYRPQFYVRTTDVTGTISAFTADDGSAAEMVMPGDRIKMTVELINPIAIEQGMRFAIREGGRTVGAGVVSKILK.

In terms of domain architecture, tr-type G spans Lys-10–Glu-214. A G1 region spans residues Gly-19–Thr-26. Residue Gly-19–Thr-26 coordinates GTP. Thr-26 serves as a coordination point for Mg(2+). The segment at Gly-60 to Asn-64 is G2. The interval Asp-81 to Gly-84 is G3. GTP-binding positions include Asp-81–His-85 and Asn-136–Asp-139. The G4 stretch occupies residues Asn-136–Asp-139. The interval Ser-174–Leu-176 is G5.

It belongs to the TRAFAC class translation factor GTPase superfamily. Classic translation factor GTPase family. EF-Tu/EF-1A subfamily. In terms of assembly, monomer.

The protein localises to the cytoplasm. The enzyme catalyses GTP + H2O = GDP + phosphate + H(+). Its function is as follows. GTP hydrolase that promotes the GTP-dependent binding of aminoacyl-tRNA to the A-site of ribosomes during protein biosynthesis. The protein is Elongation factor Tu of Acaryochloris marina (strain MBIC 11017).